The chain runs to 224 residues: Peptidyl-tRNA hydrolase (224 aa).

A tRNA-binding site is contributed by Tyr27. The active-site Proton acceptor is His32. Residues Tyr78, Asn80, and Asn126 each contribute to the tRNA site. The segment covering 203–215 (LSGPSSDLDGSNP) has biased composition (low complexity). The interval 203-224 (LSGPSSDLDGSNPAPGHGEASS) is disordered.

This sequence belongs to the PTH family. Monomer.

It is found in the cytoplasm. It catalyses the reaction an N-acyl-L-alpha-aminoacyl-tRNA + H2O = an N-acyl-L-amino acid + a tRNA + H(+). Functionally, hydrolyzes ribosome-free peptidyl-tRNAs (with 1 or more amino acids incorporated), which drop off the ribosome during protein synthesis, or as a result of ribosome stalling. Catalyzes the release of premature peptidyl moieties from peptidyl-tRNA molecules trapped in stalled 50S ribosomal subunits, and thus maintains levels of free tRNAs and 50S ribosomes. This is Peptidyl-tRNA hydrolase from Synechococcus sp. (strain JA-2-3B'a(2-13)) (Cyanobacteria bacterium Yellowstone B-Prime).